Here is a 97-residue protein sequence, read N- to C-terminus: YcgL domain-containing protein APP7_0754 (97 aa).

The 85-residue stretch at 6–90 folds into the YcgL domain; sequence NLCAIYKSPK…PPENLLKTFL (85 aa).

This chain is YcgL domain-containing protein APP7_0754, found in Actinobacillus pleuropneumoniae serotype 7 (strain AP76).